Consider the following 237-residue polypeptide: Uridylate kinase (237 aa).

9-12 is an ATP binding site; that stretch reads KLSG. The segment at 17-22 is involved in allosteric activation by GTP; that stretch reads GSQGYG. UMP is bound at residue Gly51. ATP-binding residues include Gly52 and Arg56. UMP contacts are provided by residues Asp71 and 132 to 139; that span reads CGNPFFTT. Residues Thr159, Tyr165, and Asp168 each contribute to the ATP site.

It belongs to the UMP kinase family. In terms of assembly, homohexamer.

Its subcellular location is the cytoplasm. The enzyme catalyses UMP + ATP = UDP + ADP. It functions in the pathway pyrimidine metabolism; CTP biosynthesis via de novo pathway; UDP from UMP (UMPK route): step 1/1. Allosterically activated by GTP. Inhibited by UTP. Catalyzes the reversible phosphorylation of UMP to UDP. This chain is Uridylate kinase, found in Synechococcus sp. (strain CC9902).